Reading from the N-terminus, the 332-residue chain is Ribosomal RNA small subunit methyltransferase H (332 aa).

S-adenosyl-L-methionine-binding positions include 39-41 (GGY), D56, F83, D100, and Q107.

Belongs to the methyltransferase superfamily. RsmH family.

It is found in the cytoplasm. It catalyses the reaction cytidine(1402) in 16S rRNA + S-adenosyl-L-methionine = N(4)-methylcytidine(1402) in 16S rRNA + S-adenosyl-L-homocysteine + H(+). Specifically methylates the N4 position of cytidine in position 1402 (C1402) of 16S rRNA. The polypeptide is Ribosomal RNA small subunit methyltransferase H (Bartonella quintana (strain Toulouse) (Rochalimaea quintana)).